The sequence spans 377 residues: Carbamoyl phosphate synthase small chain (377 aa).

Positions Met-1–Lys-186 are CPSase. L-glutamine contacts are provided by Ser-47, Gly-238, and Gly-240. The 188-residue stretch at His-190–Ala-377 folds into the Glutamine amidotransferase type-1 domain. Cys-266 acts as the Nucleophile in catalysis. 5 residues coordinate L-glutamine: Leu-267, Gln-270, Asn-308, Gly-310, and Phe-311. Residues His-350 and Glu-352 contribute to the active site.

The protein belongs to the CarA family. Composed of two chains; the small (or glutamine) chain promotes the hydrolysis of glutamine to ammonia, which is used by the large (or ammonia) chain to synthesize carbamoyl phosphate. Tetramer of heterodimers (alpha,beta)4.

It catalyses the reaction hydrogencarbonate + L-glutamine + 2 ATP + H2O = carbamoyl phosphate + L-glutamate + 2 ADP + phosphate + 2 H(+). The enzyme catalyses L-glutamine + H2O = L-glutamate + NH4(+). The protein operates within amino-acid biosynthesis; L-arginine biosynthesis; carbamoyl phosphate from bicarbonate: step 1/1. It functions in the pathway pyrimidine metabolism; UMP biosynthesis via de novo pathway; (S)-dihydroorotate from bicarbonate: step 1/3. In terms of biological role, small subunit of the glutamine-dependent carbamoyl phosphate synthetase (CPSase). CPSase catalyzes the formation of carbamoyl phosphate from the ammonia moiety of glutamine, carbonate, and phosphate donated by ATP, constituting the first step of 2 biosynthetic pathways, one leading to arginine and/or urea and the other to pyrimidine nucleotides. The small subunit (glutamine amidotransferase) binds and cleaves glutamine to supply the large subunit with the substrate ammonia. This Neisseria gonorrhoeae protein is Carbamoyl phosphate synthase small chain.